Here is a 942-residue protein sequence, read N- to C-terminus: Endoprotease bli-4 (942 aa).

A signal peptide spans 1-22 (MRISIGRIAWQILAVLIAVAFT). A propeptide spanning residues 23-116 (IEHDSICDES…EQRPKKRVKR (94 aa)) is cleaved from the precursor. At 117-871 (DYILLDNDVH…TLLIDSNKSS (755 aa)) the chain is on the lumenal side. A Ca(2+)-binding site is contributed by D124. The disordered stretch occupies residues 130–160 (PFRRSVLNRDGTRRAQRQQPQSPREIPSLPF). In terms of domain architecture, Peptidase S8 spans 168-483 (QWYLHGGAVG…YGLIDGGALV (316 aa)). N195 carries N-linked (GlcNAc...) asparagine glycosylation. D202 serves as the catalytic Charge relay system. Residue D203 participates in substrate binding. Ca(2+) contacts are provided by D211, D223, D228, and D230. The interval 211–242 (DLAANYDPLASTDINDHDDDPTPQNNGDNKHG) is disordered. 238 to 239 (DN) lines the substrate pocket. H241 acts as the Charge relay system in catalysis. Ca(2+) is bound by residues L252, N255, Q257, and G259. 2 cysteine pairs are disulfide-bonded: C258–C407 and C350–C380. Residues E283, 300–305 (SWGPED), D311, and 339–342 (ASGN) contribute to the substrate site. D305 contacts Ca(2+). D348 provides a ligand contact to Ca(2+). Substrate is bound by residues D353 and Y355. E378 contributes to the Ca(2+) binding site. S415 functions as the Charge relay system in the catalytic mechanism. Residue S415 coordinates substrate. Positions 491-629 (TVPEQHICTY…TLLLYGTADP (139 aa)) constitute a P/Homo B domain. A disulfide bond links C498 and C527. N519 is a glycosylation site (N-linked (GlcNAc...) asparagine). FU repeat units lie at residues 674–723 (NCHD…YYLD), 725–777 (DKCK…LVAD), and 804–850 (GKCD…STKS). N868 carries N-linked (GlcNAc...) asparagine glycosylation. Residues 872–892 (GFGLMFWIVVSLIAACGICAC) form a helical membrane-spanning segment. Over 893 to 942 (KKCASETKSSNVEYAPLAQYNATNGAINLGAHTDDEDDDEDEVFVNPQIV) the chain is Cytoplasmic. The segment at 922–942 (GAHTDDEDDDEDEVFVNPQIV) is disordered. Positions 926-935 (DDEDDDEDEV) are enriched in acidic residues.

Belongs to the peptidase S8 family. Furin subfamily. Ca(2+) serves as cofactor. In terms of tissue distribution, in larvae and adults, expressed in all hypodermal cells, vulva and ventral nerve cords. Most highly expressed isoform in the embryonic epidermis. As to expression, expressed primarily in the germline. In terms of tissue distribution, expressed primarily in pharyngeal epithelial cells.

It localises to the membrane. Functionally, serine endoprotease which cleaves proproteins at paired basic amino acids at the consensus RX(K/R)R motif. Involved in N-terminal processing of cuticle collagens and plays a role in cuticle biosynthesis. May cleave both sqt-3 and dpy-17 collagens to promote their secretion. Acts in ASEL sensory neurons to regulate high salt chemotaxis responses probably by cleaving insulin-like protein ins-6 into its mature and active form. Essential for embryonic and larval development. Its function is as follows. Involved in cuticle biosynthesis but dispensable for larval development. The sequence is that of Endoprotease bli-4 (bli-4) from Caenorhabditis elegans.